The chain runs to 510 residues: UDP-N-acetylmuramoyl-tripeptide--D-alanyl-D-alanine ligase (510 aa).

136–142 (GSSGKTS) is an ATP binding site.

This sequence belongs to the MurCDEF family. MurF subfamily.

It localises to the cytoplasm. It catalyses the reaction D-alanyl-D-alanine + UDP-N-acetyl-alpha-D-muramoyl-L-alanyl-gamma-D-glutamyl-meso-2,6-diaminopimelate + ATP = UDP-N-acetyl-alpha-D-muramoyl-L-alanyl-gamma-D-glutamyl-meso-2,6-diaminopimeloyl-D-alanyl-D-alanine + ADP + phosphate + H(+). It functions in the pathway cell wall biogenesis; peptidoglycan biosynthesis. In terms of biological role, involved in cell wall formation. Catalyzes the final step in the synthesis of UDP-N-acetylmuramoyl-pentapeptide, the precursor of murein. This Mycobacterium bovis (strain ATCC BAA-935 / AF2122/97) protein is UDP-N-acetylmuramoyl-tripeptide--D-alanyl-D-alanine ligase.